The chain runs to 421 residues: Testin (421 aa).

In terms of domain architecture, PET spans 92-199; sequence MILTNPVAAK…GDVKLPREMD (108 aa). The disordered stretch occupies residues 133-164; that stretch reads EKQPVAGSEGAQYRKKQLAKQLPAHDQDPSKC. Positions 155–164 are enriched in basic and acidic residues; the sequence is PAHDQDPSKC. 3 consecutive LIM zinc-binding domains span residues 234–297, 299–359, and 362–421; these read YSCY…CDSE, PRCA…NHAV, and QGCH…KMMS.

This sequence belongs to the prickle / espinas / testin family. In terms of assembly, interacts via LIM domain 1 with ZYX. Interacts (via LIM domain 3) with ENAH and VASP. Interacts with ALKBH4, talin, actin, alpha-actinin, GRIP1 and PXN. Interacts (via LIM domain 2) with ACTL7A (via N-terminus). Heterodimer with ACTL7A; the heterodimer interacts with ENAH to form a heterotrimer.

The protein resides in the cytoplasm. It is found in the cell junction. The protein localises to the focal adhesion. Scaffold protein that may play a role in cell adhesion, cell spreading and in the reorganization of the actin cytoskeleton. Plays a role in the regulation of cell proliferation. May act as a tumor suppressor. This is Testin (TES) from Neofelis nebulosa (Clouded leopard).